Consider the following 124-residue polypeptide: Snaclec rhodocetin subunit delta (124 aa).

Disulfide bonds link C1/C12, C29/C120, and C95/C112. The C-type lectin domain maps to 8–121; that stretch reads YNGYCYRVFS…CEKTVSFVCK (114 aa).

It belongs to the snaclec family. As to quaternary structure, heterotetramer of subunit alpha, beta, gamma and delta; only the gamma and the delta subunits are disulfide-linked. Alpha-beta heterodimer and gamma-delta heterodimer associate orthogonally, giving a cruciform conformation. This heterotetramer may covalently dimerizes thanks to the gamma subunit. In terms of tissue distribution, expressed by the venom gland.

Its subcellular location is the secreted. Functionally, potent inhibitor of collagen-induced platelet aggregation. It acts by binding to the integrin alpha2A domain and blocks collagen binding to integrin alpha-2/beta-1 (ITGA2/ITGB1). The gamma/delta subunits mainly contribute to this activity. The polypeptide is Snaclec rhodocetin subunit delta (Calloselasma rhodostoma (Malayan pit viper)).